Consider the following 181-residue polypeptide: Adenine phosphoribosyltransferase (181 aa).

This sequence belongs to the purine/pyrimidine phosphoribosyltransferase family. As to quaternary structure, homodimer.

The protein localises to the cytoplasm. The catalysed reaction is AMP + diphosphate = 5-phospho-alpha-D-ribose 1-diphosphate + adenine. The protein operates within purine metabolism; AMP biosynthesis via salvage pathway; AMP from adenine: step 1/1. Functionally, catalyzes a salvage reaction resulting in the formation of AMP, that is energically less costly than de novo synthesis. In Aliivibrio fischeri (strain ATCC 700601 / ES114) (Vibrio fischeri), this protein is Adenine phosphoribosyltransferase.